We begin with the raw amino-acid sequence, 172 residues long: DNA-directed RNA polymerase II subunit rpb7 (172 aa).

This sequence belongs to the eukaryotic RPB7/RPC8 RNA polymerase subunit family. In terms of assembly, component of the RNA polymerase II (Pol II) complex consisting of 12 subunits. RPB4 and RPB7 form a subcomplex that protrudes from the 10-subunit Pol II core complex.

Its subcellular location is the nucleus. In terms of biological role, DNA-dependent RNA polymerase catalyzes the transcription of DNA into RNA using the four ribonucleoside triphosphates as substrates. Component of RNA polymerase II which synthesizes mRNA precursors and many functional non-coding RNAs. Pol II is the central component of the basal RNA polymerase II transcription machinery. It is composed of mobile elements that move relative to each other. RPB7 is part of a subcomplex with RPB4 that binds to a pocket formed by RPB1, RPB2 and RPB6 at the base of the clamp element. The RPB4-RPB7 subcomplex seems to lock the clamp via RPB7 in the closed conformation thus preventing double-stranded DNA to enter the active site cleft. The RPB4-RPB7 subcomplex binds single-stranded DNA and RNA. In Dictyostelium discoideum (Social amoeba), this protein is DNA-directed RNA polymerase II subunit rpb7 (polr2g).